We begin with the raw amino-acid sequence, 419 residues long: Serine--tRNA ligase (419 aa).

226 to 228 (TSE) contributes to the L-serine binding site. Residues 257–259 (RRE) and Val-273 contribute to the ATP site. Position 280 (Glu-280) interacts with L-serine. 344–347 (ELTS) is a binding site for ATP. Thr-379 is a binding site for L-serine.

It belongs to the class-II aminoacyl-tRNA synthetase family. Type-1 seryl-tRNA synthetase subfamily. As to quaternary structure, homodimer. The tRNA molecule binds across the dimer.

The protein resides in the cytoplasm. The catalysed reaction is tRNA(Ser) + L-serine + ATP = L-seryl-tRNA(Ser) + AMP + diphosphate + H(+). It carries out the reaction tRNA(Sec) + L-serine + ATP = L-seryl-tRNA(Sec) + AMP + diphosphate + H(+). It participates in aminoacyl-tRNA biosynthesis; selenocysteinyl-tRNA(Sec) biosynthesis; L-seryl-tRNA(Sec) from L-serine and tRNA(Sec): step 1/1. Functionally, catalyzes the attachment of serine to tRNA(Ser). Is also able to aminoacylate tRNA(Sec) with serine, to form the misacylated tRNA L-seryl-tRNA(Sec), which will be further converted into selenocysteinyl-tRNA(Sec). This Mycolicibacterium vanbaalenii (strain DSM 7251 / JCM 13017 / BCRC 16820 / KCTC 9966 / NRRL B-24157 / PYR-1) (Mycobacterium vanbaalenii) protein is Serine--tRNA ligase.